The sequence spans 267 residues: Putative phosphatase bbp_030 (267 aa).

Asp-8 serves as the catalytic Nucleophile. A Mg(2+)-binding site is contributed by Asp-8. Leu-9 provides a ligand contact to phosphate. Asp-10 contributes to the Mg(2+) binding site. Residues 42–43 (TG) and Lys-191 each bind phosphate. Mg(2+) is bound at residue Asp-214. Residue Asn-217 coordinates phosphate.

Belongs to the HAD-like hydrolase superfamily. Cof family. It depends on Mg(2+) as a cofactor.

The protein is Putative phosphatase bbp_030 of Buchnera aphidicola subsp. Baizongia pistaciae (strain Bp).